The following is a 555-amino-acid chain: MDKRHDPSRRIIAPHGTQLSCKSWLTEAPMRMLMNNLHPDVAERPEDLVVYGGIGRAARDWDCYDKIIEVLQRLEDDETLLVQSGKPVGVFRTHADAPRVLIANSNLVPHWANWEHFNELDKLGLAMYGQMTAGSWIYIGTQGIVQGTYETFVSVAKQHFDGISKGKWILTGGLGGMGGAQTLAGTMAGFSVLACEVDETRIDFRLRTRYVDKKATSLDEALAMIEEANQAGKPVSVGLLANAADVFAELVKRGVTPDVVTDQTSAHDPLNGYLPQGWTMAEAAAMRKTDEAAVIKAAKASMAVQVQAMLDLQTAGAATLDYGNNIRQMAFEMGVENAFDFPGFVPAYIRPLFCEGIGPFRWVALSGDPEDIYKTDAKVKELIPDNPHLHNWLDMARERIAFQGLPARICWVGLKDRARLALAFNEMVKNGELSAPVVIGRDHLDSGSVASPNRETESMLDGSDAVSDWPLLNALLNTASGATWVSLHHGGGVGMGFSQHSGVVIVCDGTDAAAKRVGRVLWNDPATGVMRHADAGYEIAKNCAKEQGLDLPMQD.

NAD(+) contacts are provided by residues 52 to 53, Q130, 176 to 178, E196, R201, 242 to 243, 263 to 267, 273 to 274, and Y322; these read GG, GMG, NA, QTSAH, and YL. Residue C410 is part of the active site. An NAD(+)-binding site is contributed by G492.

Belongs to the urocanase family. NAD(+) is required as a cofactor.

The protein localises to the cytoplasm. The enzyme catalyses 4-imidazolone-5-propanoate = trans-urocanate + H2O. It functions in the pathway amino-acid degradation; L-histidine degradation into L-glutamate; N-formimidoyl-L-glutamate from L-histidine: step 2/3. Functionally, catalyzes the conversion of urocanate to 4-imidazolone-5-propionate. This chain is Urocanate hydratase, found in Shewanella baltica (strain OS195).